A 147-amino-acid chain; its full sequence is Hemoglobin subunit gamma (147 aa).

The Globin domain occupies 3–147 (NFTAEDKAAI…VASALASRYH (145 aa)). The heme b site is built by His64 and His93.

Belongs to the globin family. Heterotetramer of two alpha chains and two gamma chains in fetal hemoglobin (Hb F). As to expression, red blood cells.

Its function is as follows. Gamma chains make up the fetal hemoglobin F, in combination with alpha chains. This Lagothrix lagotricha (Brown woolly monkey) protein is Hemoglobin subunit gamma (HBG).